Consider the following 549-residue polypeptide: Oxygen-dependent choline dehydrogenase (549 aa).

FAD is bound at residue 4–33 (DFVIIGSGSAGSALAYRLSEDGKNSVLVIE). Catalysis depends on histidine 465, which acts as the Proton acceptor. Residues 530–549 (PLARSNQEPWINPRAAVSDR) are disordered.

It belongs to the GMC oxidoreductase family. It depends on FAD as a cofactor.

The enzyme catalyses choline + A = betaine aldehyde + AH2. It carries out the reaction betaine aldehyde + NAD(+) + H2O = glycine betaine + NADH + 2 H(+). Its pathway is amine and polyamine biosynthesis; betaine biosynthesis via choline pathway; betaine aldehyde from choline (cytochrome c reductase route): step 1/1. Its function is as follows. Involved in the biosynthesis of the osmoprotectant glycine betaine. Catalyzes the oxidation of choline to betaine aldehyde and betaine aldehyde to glycine betaine at the same rate. The protein is Oxygen-dependent choline dehydrogenase of Rhizobium etli (strain ATCC 51251 / DSM 11541 / JCM 21823 / NBRC 15573 / CFN 42).